Consider the following 364-residue polypeptide: Variable large protein 21 (364 aa).

Positions 1 to 26 (MRKRISAIINKLNISIMMMIVVLMIG) are cleaved as a signal peptide. Cys27 carries N-palmitoyl cysteine lipidation. The S-diacylglycerol cysteine moiety is linked to residue Cys27.

This sequence belongs to the variable large protein (Vlp) family. Alpha subfamily.

The protein resides in the cell outer membrane. Functionally, the Vlp and Vsp proteins are antigenically distinct proteins, only one vlp or vsp gene is transcriptionally active at any one time. Switching between these genes is a mechanism of host immune response evasion. The protein is Variable large protein 21 of Borrelia hermsii.